Reading from the N-terminus, the 433-residue chain is Probable carboxypeptidase ATEG_02905 (433 aa).

The signal sequence occupies residues 1–18 (MKSAISLLLASAATYVGA). The tract at residues 20 to 40 (PHPEPPQLVLSPSTSTGVHGD) is disordered. N-linked (GlcNAc...) asparagine glycosylation is present at Asn92. Asp161 is a Zn(2+) binding site. Glu193 functions as the Proton acceptor in the catalytic mechanism. Position 194 (Glu194) interacts with Zn(2+).

Belongs to the peptidase M20A family. Requires Zn(2+) as cofactor.

The protein localises to the secreted. The protein is Probable carboxypeptidase ATEG_02905 of Aspergillus terreus (strain NIH 2624 / FGSC A1156).